The following is an 853-amino-acid chain: Vacuolar protein sorting-associated protein 41 homolog (853 aa).

The span at 1 to 25 (MAEAEEQETESLEESTDESEEESEE) shows a compositional bias: acidic residues. Residues 1–32 (MAEAEEQETESLEESTDESEEESEEEPKLKYE) form a disordered region. Residues 1–539 (MAEAEEQETE…YLTLRHKDVF (539 aa)) are interaction with ARL8B. A CHCR repeat occupies 567–711 (VDMLLDNEDK…SIDKPPFITG (145 aa)). The segment at 790–838 (CESCLSPILPTDAAKPFSVVVFHCRHMFHKECLPMPSMNAPAQYCNICS) adopts an RING-type; atypical zinc-finger fold.

This sequence belongs to the VPS41 family. As to quaternary structure, component of the putative homotypic fusion and vacuole protein sorting (HOPS) complex; the core of which composed of the class C Vps proteins VPS11, VPS16, VPS18 and VPS33A, is associated with VPS39 and VPS41. Interacts with RILP, MON1B. Interacts with ARL8B (GTP-bound form); involved in recruitment to lysosomes and probably hierarchial assembly of the HOPS complex at lysosomal membranes. In vitro can self-assemble into a lattice. Associates with adapter protein complex 3 (AP-3) and clathrin:AP-3 complexes. Interacts with STX17; this interaction is increased in the absence of TMEM39A. Interacts with ARL8B and PLEKHM1; the interaction mediates the recruitment of the HOPS complex to lysosomes. Interacts with RAB7, RAB2A and RAB2B. Interacts with RAB39A (GTP-bound) and RAB39B (GTP-bound); interaction with RAB39A leads to a functional HOPS complex that mediates autophagosome-lysosome membrane tethering.

Its subcellular location is the endosome membrane. The protein localises to the late endosome membrane. It localises to the early endosome membrane. It is found in the lysosome membrane. The protein resides in the golgi apparatus. Its subcellular location is the trans-Golgi network. The protein localises to the cytoplasmic vesicle. It localises to the clathrin-coated vesicle. It is found in the cytoplasm. The protein resides in the cytosol. Functionally, plays a role in vesicle-mediated protein trafficking to lysosomal compartments including the endocytic membrane transport and autophagic pathways. Believed to act in part as a core component of the putative HOPS endosomal tethering complex is proposed to be involved in the Rab5-to-Rab7 endosome conversion probably implicating MON1A/B, and via binding SNAREs and SNARE complexes to mediate tethering and docking events during SNARE-mediated membrane fusion. The HOPS complex is proposed to be recruited to Rab7 on the late endosomal membrane and to regulate late endocytic, phagocytic and autophagic traffic towards lysosomes. Involved in homotypic vesicle fusions between late endosomes and in heterotypic fusions between late endosomes and lysosomes implicated in degradation of endocytosed cargo. Required for fusion of autophagosomes with lysosomes. Links the HOPS complex to endosomal via its association with RILP and to lysosomal membranes via its association with ARL8B, suggesting that these interactions may bring the compartments to close proximity for fusion. Involved in the direct trans-Golgi network to late endosomes transport of lysosomal membrane proteins independently of HOPS. Involved in sorting to the regulated secretory pathway presumably implicating the AP-3 adapter complex. May play a role in HOPS-independent function in the regulated secretory pathway. This chain is Vacuolar protein sorting-associated protein 41 homolog (Vps41), found in Mus musculus (Mouse).